The following is a 217-amino-acid chain: Cytidylate kinase (217 aa).

11–19 (GPAGAGKST) is an ATP binding site.

This sequence belongs to the cytidylate kinase family. Type 1 subfamily.

Its subcellular location is the cytoplasm. It carries out the reaction CMP + ATP = CDP + ADP. The enzyme catalyses dCMP + ATP = dCDP + ADP. The sequence is that of Cytidylate kinase from Clostridium perfringens (strain ATCC 13124 / DSM 756 / JCM 1290 / NCIMB 6125 / NCTC 8237 / Type A).